Consider the following 267-residue polypeptide: Inositol-1-monophosphatase (267 aa).

4 residues coordinate Mg(2+): Glu-66, Asp-84, Leu-86, and Asp-87. Substrate is bound at residue Glu-66. Substrate contacts are provided by residues 86-89 (LDGS), Arg-182, and Asp-213. Asp-213 lines the Mg(2+) pocket.

This sequence belongs to the inositol monophosphatase superfamily. The cofactor is Mg(2+).

The catalysed reaction is a myo-inositol phosphate + H2O = myo-inositol + phosphate. This is Inositol-1-monophosphatase (suhB) from Aeropyrum pernix (strain ATCC 700893 / DSM 11879 / JCM 9820 / NBRC 100138 / K1).